Reading from the N-terminus, the 292-residue chain is Acetyl-coenzyme A carboxylase carboxyl transferase subunit beta (292 aa).

Positions 23-292 (VWSKCTACGN…TEATEVSVNE (270 aa)) constitute a CoA carboxyltransferase N-terminal domain. Residues Cys-27, Cys-30, Cys-46, and Cys-49 each contribute to the Zn(2+) site. A C4-type zinc finger spans residues 27 to 49 (CTACGNIIYKADLERSLNVCPKC).

It belongs to the AccD/PCCB family. Acetyl-CoA carboxylase is a heterohexamer composed of biotin carboxyl carrier protein (AccB), biotin carboxylase (AccC) and two subunits each of ACCase subunit alpha (AccA) and ACCase subunit beta (AccD). The cofactor is Zn(2+).

It is found in the cytoplasm. The enzyme catalyses N(6)-carboxybiotinyl-L-lysyl-[protein] + acetyl-CoA = N(6)-biotinyl-L-lysyl-[protein] + malonyl-CoA. The protein operates within lipid metabolism; malonyl-CoA biosynthesis; malonyl-CoA from acetyl-CoA: step 1/1. In terms of biological role, component of the acetyl coenzyme A carboxylase (ACC) complex. Biotin carboxylase (BC) catalyzes the carboxylation of biotin on its carrier protein (BCCP) and then the CO(2) group is transferred by the transcarboxylase to acetyl-CoA to form malonyl-CoA. The polypeptide is Acetyl-coenzyme A carboxylase carboxyl transferase subunit beta (Idiomarina loihiensis (strain ATCC BAA-735 / DSM 15497 / L2-TR)).